Reading from the N-terminus, the 1104-residue chain is Translation initiation factor IF-2 (1104 aa).

Disordered stretches follow at residues 51 to 444 (SLLG…LAAQ) and 461 to 497 (LARP…RRRA). 2 stretches are compositionally biased toward low complexity: residues 60-119 (AKPA…KPQA) and 127-164 (ATPK…AAKP). Over residues 189 to 202 (APTPRPTPARPTPR) the composition is skewed to pro residues. Low complexity-rich tracts occupy residues 203–215 (PAGA…PTPG), 227–246 (GAPS…KPGA), 311–336 (STTG…PAGM), and 366–396 (PTKA…SFRP). The span at 406 to 420 (GRPDWDDSARLDALR) shows a compositional bias: basic and acidic residues. Over residues 481 to 495 (MRKRKKETARQRQRR) the composition is skewed to basic residues. In terms of domain architecture, tr-type G spans 596 to 768 (RRPPVVTVMG…LLLVTEVEDL (173 aa)). The G1 stretch occupies residues 605 to 612 (GHVDHGKT). Position 605 to 612 (605 to 612 (GHVDHGKT)) interacts with GTP. A G2 region spans residues 630 to 634 (GITQH). Positions 655-658 (DTPG) are G3. GTP contacts are provided by residues 655 to 659 (DTPGH) and 709 to 712 (NKID). The segment at 709-712 (NKID) is G4. The interval 745–747 (SAI) is G5.

The protein belongs to the TRAFAC class translation factor GTPase superfamily. Classic translation factor GTPase family. IF-2 subfamily.

It is found in the cytoplasm. In terms of biological role, one of the essential components for the initiation of protein synthesis. Protects formylmethionyl-tRNA from spontaneous hydrolysis and promotes its binding to the 30S ribosomal subunits. Also involved in the hydrolysis of GTP during the formation of the 70S ribosomal complex. In Synechococcus sp. (strain CC9605), this protein is Translation initiation factor IF-2.